The sequence spans 356 residues: MDAGPAPAREPRRIRVLVVDDSAVVRNVFQQELSADPGIEVVGTAPDPFAARDLILERAPDVITLDVEMPRMDGITFLHKIMRYRPTPVIVVSSLTPAGGALALEALAAGACDVMCKPGAAYSVGEMTADLVEKVKEAAAAGVRAPAPLPPPDRAATPRALARTTLQVVAIGASTGGTVAIERILAALPPGAPGIVVTQHMPELFTRYFANRLRDRSGLDAREAQGGESVVPGTVLVAPGSRHMLLRRSGARYVVEIKDGPRVNRHRPSVDVMFRSVARAAGPNAIGVILTGMGGDGAQGLRAMRDAGARTVAQDEASCVVYGMPKVAVELGAVERSLPLDRIAPEILRLAGEAGG.

The region spanning 15–132 (RVLVVDDSAV…SVGEMTADLV (118 aa)) is the Response regulatory domain. 4-aspartylphosphate is present on aspartate 66. The CheB-type methylesterase domain maps to 162–348 (ARTTLQVVAI…PLDRIAPEIL (187 aa)). Active-site residues include serine 174, histidine 200, and aspartate 296.

The protein belongs to the CheB family. Post-translationally, phosphorylated by CheA. Phosphorylation of the N-terminal regulatory domain activates the methylesterase activity.

It is found in the cytoplasm. It carries out the reaction [protein]-L-glutamate 5-O-methyl ester + H2O = L-glutamyl-[protein] + methanol + H(+). It catalyses the reaction L-glutaminyl-[protein] + H2O = L-glutamyl-[protein] + NH4(+). Functionally, involved in chemotaxis. Part of a chemotaxis signal transduction system that modulates chemotaxis in response to various stimuli. Catalyzes the demethylation of specific methylglutamate residues introduced into the chemoreceptors (methyl-accepting chemotaxis proteins or MCP) by CheR. Also mediates the irreversible deamidation of specific glutamine residues to glutamic acid. The sequence is that of Protein-glutamate methylesterase/protein-glutamine glutaminase 4 from Anaeromyxobacter dehalogenans (strain 2CP-C).